The following is a 370-amino-acid chain: Aminomethyltransferase (370 aa).

This sequence belongs to the GcvT family. In terms of assembly, the glycine cleavage system is composed of four proteins: P, T, L and H.

The catalysed reaction is N(6)-[(R)-S(8)-aminomethyldihydrolipoyl]-L-lysyl-[protein] + (6S)-5,6,7,8-tetrahydrofolate = N(6)-[(R)-dihydrolipoyl]-L-lysyl-[protein] + (6R)-5,10-methylene-5,6,7,8-tetrahydrofolate + NH4(+). The glycine cleavage system catalyzes the degradation of glycine. This chain is Aminomethyltransferase, found in Prochlorococcus marinus (strain AS9601).